The sequence spans 565 residues: Periplasmic trehalase (565 aa).

Positions 1 to 30 (MKSPAPSRPQKMALIPACIFLCFAALSVQA) are cleaved as a signal peptide. Substrate is bound by residues R152, 159–160 (WD), N196, 205–207 (RSQ), 277–279 (RPE), and G310. Residues D312 and E496 each act as proton donor/acceptor in the active site. E511 contacts substrate. The disordered stretch occupies residues 539-565 (CDNVPATRPLSESTTQPVKPKEAEPTL).

Belongs to the glycosyl hydrolase 37 family. As to quaternary structure, monomer.

Its subcellular location is the periplasm. The catalysed reaction is alpha,alpha-trehalose + H2O = alpha-D-glucose + beta-D-glucose. In terms of biological role, provides the cells with the ability to utilize trehalose at high osmolarity by splitting it into glucose molecules that can subsequently be taken up by the phosphotransferase-mediated uptake system. This chain is Periplasmic trehalase, found in Shigella dysenteriae serotype 1 (strain Sd197).